Reading from the N-terminus, the 475-residue chain is Aspartyl/glutamyl-tRNA(Asn/Gln) amidotransferase subunit B (475 aa).

Belongs to the GatB/GatE family. GatB subfamily. In terms of assembly, heterotrimer of A, B and C subunits.

The catalysed reaction is L-glutamyl-tRNA(Gln) + L-glutamine + ATP + H2O = L-glutaminyl-tRNA(Gln) + L-glutamate + ADP + phosphate + H(+). It carries out the reaction L-aspartyl-tRNA(Asn) + L-glutamine + ATP + H2O = L-asparaginyl-tRNA(Asn) + L-glutamate + ADP + phosphate + 2 H(+). Allows the formation of correctly charged Asn-tRNA(Asn) or Gln-tRNA(Gln) through the transamidation of misacylated Asp-tRNA(Asn) or Glu-tRNA(Gln) in organisms which lack either or both of asparaginyl-tRNA or glutaminyl-tRNA synthetases. The reaction takes place in the presence of glutamine and ATP through an activated phospho-Asp-tRNA(Asn) or phospho-Glu-tRNA(Gln). This is Aspartyl/glutamyl-tRNA(Asn/Gln) amidotransferase subunit B from Staphylococcus aureus (strain bovine RF122 / ET3-1).